A 96-amino-acid polypeptide reads, in one-letter code: Small ubiquitin-related modifier 2 (96 aa).

Residue K11 forms a Glycyl lysine isopeptide (Lys-Gly) (interchain with G-Cter in SUMO) linkage. Residues 16 to 96 (DHINLKVAGQ…FQQQTGGHRI (81 aa)) enclose the Ubiquitin-like domain. G93 participates in a covalent cross-link: Glycyl lysine isopeptide (Gly-Lys) (interchain with K-? in acceptor proteins). Residues 94-96 (HRI) constitute a propeptide that is removed on maturation.

The protein belongs to the ubiquitin family. SUMO subfamily. As to quaternary structure, interacts with sae2 and ube2i. Covalently attached to a number of proteins. Polymeric chains can be formed through Lys-11 cross-linking. Post-translationally, cleavage of precursor form by a sentrin-specific protease is necessary for function.

The protein localises to the nucleus. In terms of biological role, ubiquitin-like protein that can be covalently attached to proteins as a monomer or as a lysine-linked polymer. Covalent attachment via an isopeptide bond to its substrates requires prior activation by the E1 complex sae1-sae2 and linkage to the E2 enzyme ube2i, and can be promoted by an E3 ligase such as pias1-4. This post-translational modification on lysine residues of proteins plays a crucial role in a number of cellular processes such as nuclear transport, DNA replication and repair, mitosis and signal transduction. Polymeric sumo2 chains are also susceptible to polyubiquitination which functions as a signal for proteasomal degradation of modified proteins. In Danio rerio (Zebrafish), this protein is Small ubiquitin-related modifier 2.